The sequence spans 439 residues: Kinesin-like protein KIN-13 (439 aa).

1–5 contacts ATP; the sequence is GSGKS. The 240-residue stretch at 1 to 240 folds into the Kinesin motor domain; sequence GSGKSFTMMH…LRYADRVKEL (240 aa).

Belongs to the TRAFAC class myosin-kinesin ATPase superfamily. Kinesin family. KIN-13 subfamily. In terms of assembly, interacts with PLK. Phosphorylated by PLK.

The protein resides in the cytoplasm. Its subcellular location is the cytoskeleton. It is found in the cell projection. It localises to the cilium. The protein localises to the flagellum. The protein resides in the flagellum basal body. Its subcellular location is the flagellum axoneme. It is found in the spindle. It localises to the chromosome. The protein localises to the centromere. The protein resides in the kinetochore. Involved in cell cycle. Involved in formation of flagella, regulation of flagellar length, and formation of median bodies during interphase. Regulates flagellar length in all eight distal flagellar tips by promoting disassembly of the microtubules. Disassembles microtubules at the distal flagellar tips in a length-dependent manner in order to maintain different equilibrium lengths of the four flagellar pairs. Regulates interphase and mitotic microtubule dynamics. Regulates microtubule disassembly dynamics of the dual mitotic spindles and the median body. The polypeptide is Kinesin-like protein KIN-13 (Giardia intestinalis (Giardia lamblia)).